The chain runs to 206 residues: Cell division protein SepF (206 aa).

Basic and acidic residues predominate over residues 31-53 (EEKERRKTERQEQRQAVKQEKRT). A disordered region spans residues 31-81 (EEKERRKTERQEQRQAVKQEKRTFPSQRPAFSEEAPTSSSSKLSAASGSSD). The span at 60–80 (AFSEEAPTSSSSKLSAASGSS) shows a compositional bias: low complexity.

It belongs to the SepF family. Homodimer. Interacts with FtsZ.

It is found in the cytoplasm. Functionally, cell division protein that is part of the divisome complex and is recruited early to the Z-ring. Probably stimulates Z-ring formation, perhaps through the cross-linking of FtsZ protofilaments. Its function overlaps with FtsA. The sequence is that of Cell division protein SepF from Lachnoclostridium phytofermentans (strain ATCC 700394 / DSM 18823 / ISDg) (Clostridium phytofermentans).